A 128-amino-acid polypeptide reads, in one-letter code: U24-ctenitoxin-Pn1a (128 aa).

Thyroglobulin type-1 domains follow at residues Lys-4–Cys-67 and Lys-72–Cys-127. 4 disulfides stabilise this stretch: Cys-7–Cys-27, Cys-38–Cys-45, Cys-47–Cys-67, and Cys-107–Cys-127.

Expressed by the venom gland.

The protein resides in the secreted. Functionally, cysteine proteinase inhibitor. This is U24-ctenitoxin-Pn1a from Phoneutria nigriventer (Brazilian armed spider).